Reading from the N-terminus, the 682-residue chain is Putative L-type lectin-domain containing receptor kinase I.1 (682 aa).

The first 19 residues, 1-19 (MAQRLHLLLLLFLICFVNL), serve as a signal peptide directing secretion. Residues 20–292 (ISFSSQQDLS…RPKKPEKTSP (273 aa)) lie on the Extracellular side of the membrane. The interval 27–264 (DLSFIYNGFN…YQYILGWSFS (238 aa)) is legume-lectin like. Asn-60, Asn-130, Asn-187, Asn-210, and Asn-231 each carry an N-linked (GlcNAc...) asparagine glycan. Residues 293–313 (LLIVLLIILAIIVMVVVGGFY) traverse the membrane as a helical segment. The Cytoplasmic segment spans residues 314 to 682 (LYRRKKYAEV…SHTIIYGDGR (369 aa)). Positions 348-622 (FNKDGRLGRG…VQYINRHQRL (275 aa)) constitute a Protein kinase domain. ATP is bound by residues 354–362 (LGRGGFGEV) and Lys-376. Asp-472 functions as the Proton acceptor in the catalytic mechanism.

In the C-terminal section; belongs to the protein kinase superfamily. Ser/Thr protein kinase family. It in the N-terminal section; belongs to the leguminous lectin family.

The protein localises to the cell membrane. The enzyme catalyses L-seryl-[protein] + ATP = O-phospho-L-seryl-[protein] + ADP + H(+). It catalyses the reaction L-threonyl-[protein] + ATP = O-phospho-L-threonyl-[protein] + ADP + H(+). Involved in resistance response to the pathogenic fungus Alternaria brassicicola. The sequence is that of Putative L-type lectin-domain containing receptor kinase I.1 from Arabidopsis thaliana (Mouse-ear cress).